The sequence spans 428 residues: Histidine--tRNA ligase (428 aa).

It belongs to the class-II aminoacyl-tRNA synthetase family. As to quaternary structure, homodimer.

The protein resides in the cytoplasm. It carries out the reaction tRNA(His) + L-histidine + ATP = L-histidyl-tRNA(His) + AMP + diphosphate + H(+). The protein is Histidine--tRNA ligase of Lactobacillus johnsonii (strain CNCM I-12250 / La1 / NCC 533).